The primary structure comprises 343 residues: Biotin synthase (343 aa).

One can recognise a Radical SAM core domain in the interval 36–254 (RQVQVSTLLS…IAVARIMMPR (219 aa)). Cys51, Cys55, and Cys58 together coordinate [4Fe-4S] cluster. [2Fe-2S] cluster is bound by residues Cys95, Cys126, Cys186, and Arg258.

Belongs to the radical SAM superfamily. Biotin synthase family. Homodimer. [4Fe-4S] cluster serves as cofactor. Requires [2Fe-2S] cluster as cofactor.

The enzyme catalyses (4R,5S)-dethiobiotin + (sulfur carrier)-SH + 2 reduced [2Fe-2S]-[ferredoxin] + 2 S-adenosyl-L-methionine = (sulfur carrier)-H + biotin + 2 5'-deoxyadenosine + 2 L-methionine + 2 oxidized [2Fe-2S]-[ferredoxin]. It participates in cofactor biosynthesis; biotin biosynthesis; biotin from 7,8-diaminononanoate: step 2/2. In terms of biological role, catalyzes the conversion of dethiobiotin (DTB) to biotin by the insertion of a sulfur atom into dethiobiotin via a radical-based mechanism. In Erwinia tasmaniensis (strain DSM 17950 / CFBP 7177 / CIP 109463 / NCPPB 4357 / Et1/99), this protein is Biotin synthase.